Consider the following 182-residue polypeptide: NADH-quinone oxidoreductase subunit I (182 aa).

4Fe-4S ferredoxin-type domains follow at residues 52 to 82 and 92 to 121; these read LTRD…LQKA and DFFR…LTPD. The [4Fe-4S] cluster site is built by Cys-62, Cys-65, Cys-68, Cys-72, Cys-101, Cys-104, Cys-107, and Cys-111.

Belongs to the complex I 23 kDa subunit family. In terms of assembly, NDH-1 is composed of 13 different subunits. Subunits NuoA, H, J, K, L, M, N constitute the membrane sector of the complex. It depends on [4Fe-4S] cluster as a cofactor.

The protein resides in the cell inner membrane. It catalyses the reaction a quinone + NADH + 5 H(+)(in) = a quinol + NAD(+) + 4 H(+)(out). Its function is as follows. NDH-1 shuttles electrons from NADH, via FMN and iron-sulfur (Fe-S) centers, to quinones in the respiratory chain. The immediate electron acceptor for the enzyme in this species is believed to be ubiquinone. Couples the redox reaction to proton translocation (for every two electrons transferred, four hydrogen ions are translocated across the cytoplasmic membrane), and thus conserves the redox energy in a proton gradient. The protein is NADH-quinone oxidoreductase subunit I of Pseudomonas fluorescens (strain Pf0-1).